Consider the following 423-residue polypeptide: MRKDLLILTDILKANVAPALGCTEPGAVAYAVSKAREILGEEPREVYVAVDRDILKNGMFVSIPGTKEKGLVFAAALALVCGKSEYKLEALREATEEDIKKAHKIVNRKAVKIVLEKDAEGLYIKASVVGDKHRATVIVKDAHDNIVYEERDGVVLKAKEENLKEDKSWLKAKIKEFTIEDFLDYCDSVDFKEIEFIGEGIEMNKKIAYAGLNEEVGVGIGKMLKRQIRDEESLAKALTAAASEARMSGYPLPVMSSAGSGNHGLVAILPIAIIGEERGYDREKIIRAITLSHLLTAYVKAYIGVLSPICGCGVAAGVGMSAGLTYLLGGSRKQIKGAVSNMLAGLSGMICDGAKIGCAYKLSISVTAALEASKFAMENIFIPSDNGILGNTAEESIKNLGRISVEGMKNADDVILDIMLKKQ.

Belongs to the UPF0597 family.

This chain is UPF0597 protein TTE0269, found in Caldanaerobacter subterraneus subsp. tengcongensis (strain DSM 15242 / JCM 11007 / NBRC 100824 / MB4) (Thermoanaerobacter tengcongensis).